The chain runs to 247 residues: Carboxy-S-adenosyl-L-methionine synthase (247 aa).

Residues Tyr-38, 63-65 (GCS), Asn-131, and Arg-198 contribute to the S-adenosyl-L-methionine site.

It belongs to the class I-like SAM-binding methyltransferase superfamily. Cx-SAM synthase family. In terms of assembly, homodimer.

It catalyses the reaction prephenate + S-adenosyl-L-methionine = carboxy-S-adenosyl-L-methionine + 3-phenylpyruvate + H2O. Its function is as follows. Catalyzes the conversion of S-adenosyl-L-methionine (SAM) to carboxy-S-adenosyl-L-methionine (Cx-SAM). The protein is Carboxy-S-adenosyl-L-methionine synthase of Desulforapulum autotrophicum (strain ATCC 43914 / DSM 3382 / VKM B-1955 / HRM2) (Desulfobacterium autotrophicum).